The primary structure comprises 250 residues: UPF0246 protein cce_3295 (250 aa).

This sequence belongs to the UPF0246 family.

The protein is UPF0246 protein cce_3295 of Crocosphaera subtropica (strain ATCC 51142 / BH68) (Cyanothece sp. (strain ATCC 51142)).